Here is a 171-residue protein sequence, read N- to C-terminus: uncharacterized protein (171 aa).

This sequence belongs to the mimivirus L87/L94 family.

This is an uncharacterized protein from Acanthamoeba polyphaga (Amoeba).